Here is a 311-residue protein sequence, read N- to C-terminus: UDP-N-acetylenolpyruvoylglucosamine reductase (311 aa).

In terms of domain architecture, FAD-binding PCMH-type spans 29 to 191 (IGGKADIVLK…LSARLKLKPI (163 aa)). Arg172 is an active-site residue. Residue Ser223 is the Proton donor of the active site. Residue Glu299 is part of the active site.

It belongs to the MurB family. Requires FAD as cofactor.

The protein localises to the cytoplasm. The enzyme catalyses UDP-N-acetyl-alpha-D-muramate + NADP(+) = UDP-N-acetyl-3-O-(1-carboxyvinyl)-alpha-D-glucosamine + NADPH + H(+). The protein operates within cell wall biogenesis; peptidoglycan biosynthesis. Its function is as follows. Cell wall formation. The chain is UDP-N-acetylenolpyruvoylglucosamine reductase from Chloroherpeton thalassium (strain ATCC 35110 / GB-78).